The sequence spans 205 residues: Holliday junction branch migration complex subunit RuvA (205 aa).

A domain I region spans residues 1–64; sequence MIGKLKGVID…EDMIRLYGFA (64 aa). The tract at residues 65 to 143 is domain II; sequence NQLEREWFRL…AFAGDASGTI (79 aa). The flexible linker stretch occupies residues 144 to 152; that stretch reads GLKQELGAG. The interval 153 to 205 is domain III; the sequence is AAPAPVADAVSALSNLGYSRDQAANAVAAALKEAGENADSAKLIRLGLKELSR.

Belongs to the RuvA family. In terms of assembly, homotetramer. Forms an RuvA(8)-RuvB(12)-Holliday junction (HJ) complex. HJ DNA is sandwiched between 2 RuvA tetramers; dsDNA enters through RuvA and exits via RuvB. An RuvB hexamer assembles on each DNA strand where it exits the tetramer. Each RuvB hexamer is contacted by two RuvA subunits (via domain III) on 2 adjacent RuvB subunits; this complex drives branch migration. In the full resolvosome a probable DNA-RuvA(4)-RuvB(12)-RuvC(2) complex forms which resolves the HJ.

The protein resides in the cytoplasm. Functionally, the RuvA-RuvB-RuvC complex processes Holliday junction (HJ) DNA during genetic recombination and DNA repair, while the RuvA-RuvB complex plays an important role in the rescue of blocked DNA replication forks via replication fork reversal (RFR). RuvA specifically binds to HJ cruciform DNA, conferring on it an open structure. The RuvB hexamer acts as an ATP-dependent pump, pulling dsDNA into and through the RuvAB complex. HJ branch migration allows RuvC to scan DNA until it finds its consensus sequence, where it cleaves and resolves the cruciform DNA. This chain is Holliday junction branch migration complex subunit RuvA, found in Brucella anthropi (strain ATCC 49188 / DSM 6882 / CCUG 24695 / JCM 21032 / LMG 3331 / NBRC 15819 / NCTC 12168 / Alc 37) (Ochrobactrum anthropi).